Consider the following 251-residue polypeptide: Insulin-induced gene 1 protein (251 aa).

Residues 1–58 (MPRLEEHCWSCSCSTSVKTKDLSSAGWIVCKTGEMMSIITSVLSHAYGSLHSLQSANL) are Cytoplasmic-facing. A helical transmembrane segment spans residues 59 to 81 (IRRGLVLFIVGVVLALVLNLLQI). Topologically, residues 82-100 (QRNVTLFPEEVLDTLFSSA) are extracellular. The chain crosses the membrane as a helical span at residues 101 to 118 (WWIPLCCGTAAAVVGLLY). Residues 119–133 (PCLDHHLGEPHKFKR) lie on the Cytoplasmic side of the membrane. A helical membrane pass occupies residues 134–156 (EWASVMRCIAVFVGINHASAKLD). Residues 157–159 (FAN) lie on the Extracellular side of the membrane. Residues 160–178 (NVQLSLTLAALSLGLWWTF) traverse the membrane as a helical segment. The Cytoplasmic portion of the chain corresponds to 179–183 (DRSRS). A helical transmembrane segment spans residues 184–205 (GFGLGLTTALLATLIAQLLVYN). Over 206–219 (GIYQYTSPDFLYVR) the chain is Extracellular. A helical membrane pass occupies residues 220-237 (SWLPCIFFSGGVTVGNIG). Over 238–251 (RQLAMGSTEKIHND) the chain is Cytoplasmic. The short motif at 245–251 (TEKIHND) is the KxHxx element.

The protein belongs to the INSIG family. Interacts with scap; interaction is direct and only takes place in the presence of sterols; it prevents interaction between scap and the coat protein complex II (COPII). Associates with the SCAP-SREBP complex; association is mediated via its interaction with scap and only takes place in the presence of sterols.

The protein resides in the endoplasmic reticulum membrane. Its function is as follows. Oxysterol-binding protein that mediates feedback control of cholesterol synthesis by controlling both endoplasmic reticulum to Golgi transport of scap and degradation of hmgcr. Acts as a negative regulator of cholesterol biosynthesis by mediating the retention of the SCAP-SREBP complex in the endoplasmic reticulum, thereby blocking the processing of sterol regulatory element-binding proteins (SREBPs). Binds oxysterol, including 25-hydroxycholesterol, regulating interaction with scap and retention of the SCAP-SREBP complex in the endoplasmic reticulum. In presence of oxysterol, interacts with scap, retaining the SCAP-SREBP complex in the endoplasmic reticulum, thereby preventing scap from escorting SREBPs to the Golgi. Sterol deprivation reduces oxysterol-binding, disrupting the interaction between insig1 and scap, thereby promoting Golgi transport of the SCAP-SREBP complex, followed by processing and nuclear translocation of SREBPs. Also regulates cholesterol synthesis by regulating degradation of hmgcr. The sequence is that of Insulin-induced gene 1 protein from Danio rerio (Zebrafish).